Here is a 580-residue protein sequence, read N- to C-terminus: Glyco-Gag protein (580 aa).

Residues M1 to R51 are Cytoplasmic-facing. A helical membrane pass occupies residues L52–E72. Topologically, residues A73–D580 are extracellular. N134 carries N-linked (GlcNAc...) asparagine; by host glycosylation. 3 disordered regions span residues V171–Q282, E491–E514, and R560–D580. Residues F174–S193 are compositionally biased toward pro residues. Over residues A194 to V203 the composition is skewed to low complexity. Pro residues-rich tracts occupy residues V204–S220 and E230–P245. The span at E491–D508 shows a compositional bias: basic and acidic residues. Over residues A571–D580 the composition is skewed to polar residues. N572 carries N-linked (GlcNAc...) asparagine; by host glycosylation.

In terms of processing, glycosylated by host. Post-translationally, cleaved by host near the middle of the molecule, releasing the c-terminal half containing capsid and nucleoprotein domains op GAG.

The protein resides in the host cell membrane. In terms of biological role, plays a role in viral particle release. Presumably acts by facilitating the fission of the virion bud at the cell surface. In Feline leukemia virus, this protein is Glyco-Gag protein.